A 249-amino-acid chain; its full sequence is DNA polymerase sliding clamp 3 (249 aa).

The protein belongs to the PCNA family. In terms of assembly, homotrimer. The subunits circularize to form a toroid; DNA passes through its center. Replication factor C (RFC) is required to load the toroid on the DNA.

Its function is as follows. Sliding clamp subunit that acts as a moving platform for DNA processing. Responsible for tethering the catalytic subunit of DNA polymerase and other proteins to DNA during high-speed replication. The chain is DNA polymerase sliding clamp 3 from Aeropyrum pernix (strain ATCC 700893 / DSM 11879 / JCM 9820 / NBRC 100138 / K1).